Consider the following 490-residue polypeptide: tRNA modification GTPase MnmE (490 aa).

Positions 23, 80, and 133 each coordinate (6S)-5-formyl-5,6,7,8-tetrahydrofolate. Residues 229–412 enclose the TrmE-type G domain; the sequence is GIEVVIAGQP…LRRILLEVAG (184 aa). Residue asparagine 239 coordinates K(+). Residues 239–244, 258–264, and 283–286 contribute to the GTP site; these read NAGKSS, TPVAGTT, and DTAG. Serine 243 contacts Mg(2+). K(+) is bound by residues threonine 258, valine 260, and threonine 263. Threonine 264 is a binding site for Mg(2+). Residues 366–382 are compositionally biased toward low complexity; it reads PTAPTESAAVPPASARP. Residues 366–388 are disordered; that stretch reads PTAPTESAAVPPASARPAPAPRP. 393 to 395 is a GTP binding site; that stretch reads SAR. Position 490 (lysine 490) interacts with (6S)-5-formyl-5,6,7,8-tetrahydrofolate.

Belongs to the TRAFAC class TrmE-Era-EngA-EngB-Septin-like GTPase superfamily. TrmE GTPase family. Homodimer. Heterotetramer of two MnmE and two MnmG subunits. It depends on K(+) as a cofactor.

The protein localises to the cytoplasm. Functionally, exhibits a very high intrinsic GTPase hydrolysis rate. Involved in the addition of a carboxymethylaminomethyl (cmnm) group at the wobble position (U34) of certain tRNAs, forming tRNA-cmnm(5)s(2)U34. This is tRNA modification GTPase MnmE from Verminephrobacter eiseniae (strain EF01-2).